Consider the following 148-residue polypeptide: Protein mago nashi homolog 2 (148 aa).

Position 2 is an N-acetylalanine (A2).

This sequence belongs to the mago nashi family. As to quaternary structure, component of the pre-catalytic, catalytic and post-catalytic spliceosome complexes. Heterodimer with RBM8A. Core component of the mRNA splicing-dependent exon junction complex (EJC); the core complex contains CASC3, EIF4A3, MAGOH or MAGOHB, and RBM8A.

The protein localises to the nucleus. In terms of biological role, required for pre-mRNA splicing as component of the spliceosome. Plays a redundant role with MAGOH in the exon junction complex and in the nonsense-mediated decay (NMD) pathway. The polypeptide is Protein mago nashi homolog 2 (MAGOHB) (Bos taurus (Bovine)).